The sequence spans 96 residues: UPF0235 protein Spro_4033 (96 aa).

It belongs to the UPF0235 family.

The polypeptide is UPF0235 protein Spro_4033 (Serratia proteamaculans (strain 568)).